Consider the following 135-residue polypeptide: Helix-loop-helix protein 2 (135 aa).

The segment at 1-81 is disordered; that stretch reads MMLSPDQAAD…RRATAKYRSA (81 aa). Residues 10–21 show a composition bias toward basic and acidic residues; sequence DSDHPSSTHSDP. Over residues 68-81 the composition is skewed to basic residues; that stretch reads KRRRRRATAKYRSA. Residues 77 to 129 enclose the bHLH domain; the sequence is KYRSAHATRERIRVEAFNLAFAELRKLLPTLPPDKKLSKIEILRLAICYISYL.

In terms of assembly, homodimer. Interacts and may form heterodimers with STAT3. Expressed in developing neurons. Transiently expressed in the cerebellum during postnatal development, exclusively in the premigratory zone of the external granule layer where postmitotic neurons undergo initial stages of neuronal differentiation. Expression is not detected in mature neurons. Expressed in the anterior lobe of the adult pituitary.

Its subcellular location is the nucleus. Functionally, transcription factor which binds the E box motif 5'-CA[TC][AG]TG-3'. Involved in regulating energy expenditure, body mass, voluntary physical activity, mating behavior and reproductive longevity, acting through the hypothalamic-pituitary-gonadal axis. Acts as a transcriptional activator of target genes, including Ndn, Pcsk1, Mc4r. Is also a transcriptional activator of KISS1. May act centrally to regulate function of both white and brown adipose tissue. Together with NHLH1, required to maintain migration and survival of cells in the anterior extramural migration stream (aes), which forms the precerebellar nuclei. Also, in concert with Nhlh1, may determine fate of gonadotropin releasing hormone-1 (GnRH-1) neurons. This is Helix-loop-helix protein 2 (Nhlh2) from Mus musculus (Mouse).